A 500-amino-acid chain; its full sequence is Adenylosuccinate synthetase, chloroplastic (500 aa).

GTP contacts are provided by residues 87 to 93 and 115 to 117; these read GDEGKGK and GHT. Asp-88 serves as the catalytic Proton acceptor. Residues Asp-88 and Gly-115 each contribute to the Mg(2+) site. Residues 88–91, 113–116, Thr-205, Arg-219, Gln-299, Thr-314, and Arg-378 contribute to the IMP site; these read DEGK and NAGH. His-116 functions as the Proton donor in the catalytic mechanism. 374 to 380 is a binding site for substrate; sequence TTTGRPR. GTP-binding positions include Arg-380, 406–408, and 489–491; these read KLD and GIG.

It belongs to the adenylosuccinate synthetase family. In terms of assembly, homodimer. Requires Mg(2+) as cofactor.

It is found in the plastid. The protein localises to the chloroplast. The catalysed reaction is IMP + L-aspartate + GTP = N(6)-(1,2-dicarboxyethyl)-AMP + GDP + phosphate + 2 H(+). It participates in purine metabolism; AMP biosynthesis via de novo pathway; AMP from IMP: step 1/2. Functionally, plays an important role in the de novo pathway and in the salvage pathway of purine nucleotide biosynthesis. Catalyzes the first committed step in the biosynthesis of AMP from IMP. This chain is Adenylosuccinate synthetase, chloroplastic, found in Solanum bulbocastanum (Wild potato).